Reading from the N-terminus, the 362-residue chain is Peptide chain release factor 1 (362 aa).

Glutamine 236 carries the post-translational modification N5-methylglutamine.

The protein belongs to the prokaryotic/mitochondrial release factor family. Post-translationally, methylated by PrmC. Methylation increases the termination efficiency of RF1.

The protein resides in the cytoplasm. Peptide chain release factor 1 directs the termination of translation in response to the peptide chain termination codons UAG and UAA. The sequence is that of Peptide chain release factor 1 from Lactobacillus helveticus (strain DPC 4571).